A 536-amino-acid polypeptide reads, in one-letter code: Ecdysone receptor (536 aa).

Residues 1 to 114 are modulating; that stretch reads MKTENLIVTT…GPVPRQQEEL (114 aa). Positions 77-107 are disordered; the sequence is SPNSKLDDGNMSVHMGDGLDGKKSSSKKGPV. 2 consecutive NR C4-type zinc fingers follow at residues 115-135 and 151-175; these read CLVC…CEGC and CKFG…LKKC. The segment at residues 115-187 is a DNA-binding region (nuclear receptor); that stretch reads CLVCGDRASG…VGMRPECVVP (73 aa). The 237-residue stretch at 278-514 folds into the NR LBD domain; the sequence is NQVAVIYKLI…FLEEVWDVGD (237 aa).

Belongs to the nuclear hormone receptor family. NR1 subfamily.

The protein localises to the nucleus. Functionally, receptor for ecdysone. Binds to ecdysone response elements (ECRES). This chain is Ecdysone receptor (EcR), found in Chironomus tentans (Midge).